Reading from the N-terminus, the 217-residue chain is 3,4-dihydroxy-2-butanone 4-phosphate synthase (217 aa).

Residues 37–38, Asp42, 150–154, and Glu174 contribute to the D-ribulose 5-phosphate site; these read RE and RGGHT. Glu38 provides a ligand contact to Mg(2+). Mg(2+) is bound at residue His153.

It belongs to the DHBP synthase family. Homodimer. Mg(2+) serves as cofactor. The cofactor is Mn(2+).

It catalyses the reaction D-ribulose 5-phosphate = (2S)-2-hydroxy-3-oxobutyl phosphate + formate + H(+). It functions in the pathway cofactor biosynthesis; riboflavin biosynthesis; 2-hydroxy-3-oxobutyl phosphate from D-ribulose 5-phosphate: step 1/1. Its function is as follows. Catalyzes the conversion of D-ribulose 5-phosphate to formate and 3,4-dihydroxy-2-butanone 4-phosphate. This Cronobacter sakazakii (strain ATCC BAA-894) (Enterobacter sakazakii) protein is 3,4-dihydroxy-2-butanone 4-phosphate synthase.